The chain runs to 496 residues: Cyclin-L1 (496 aa).

Cyclin-like regions lie at residues 68–170 and 183–267; these read ELIQ…RILK and KIIV…TTLR. The segment at 301-496 is disordered; sequence NPDGTPAILS…SHSGHGRHRR (196 aa). The span at 322-347 shows a compositional bias: basic and acidic residues; sequence SPRDVKTEEKSPNFAKVKREMDDKQS. Composition is skewed to basic residues over residues 358–392, 412–426, 434–446, and 456–468; these read ENKR…RRSR, RRHH…KLKH, RHAH…HSPS, and KKHR…HRER. The segment at 363-406 is RS; the sequence is RSVSRSRSRTKSRSRSHSPRRHYNNRRRSRSGTYSSRSRSRSRS. The span at 469–478 shows a compositional bias: basic and acidic residues; sequence RERSRSFERS. The segment covering 479–496 has biased composition (basic residues); sequence HKNKHHGSSHSGHGRHRR.

This sequence belongs to the cyclin family. Cyclin L subfamily.

It is found in the nucleus speckle. The protein resides in the nucleus. It localises to the nucleoplasm. In terms of biological role, involved in pre-mRNA splicing. The sequence is that of Cyclin-L1 (ccnl1) from Xenopus laevis (African clawed frog).